Consider the following 389-residue polypeptide: MTKITGIIAEFNPFHKGHEYLLNQIDGPKIVAMSGNWMQRGEPAIFDKWTRAEMALSCGADLVVELPVTVSVQAADFFASGAVDILKNLGITDLAFGSESAIDYNEIADIYETKETEMESFIKALPEQLSYPEKTQMMWQHFTGIKFDGNTPNHVLALAYAKAAAGKNINLQAIKRVGKFHSTKLTEGFASATALRQSLFSLTERKNLLTEQTHQSVSQKPAILDLSAIKNHVPSVILETYASPKTNWAAYFPLLQYKIRLDDHLENIFQVNQELSVRLKNAVKSAKNFDELVELVYTKRYTKARVRRLLTYILLNIPKEFNLPKEIHILGFSKAGQEILAQNRGKIISKIGQKPWDELTQKADEIYQLGNVDFKEQNFGRKPIIKREK.

Residues 8 to 21 (IAEF…HEYL), G97, N153, and R176 contribute to the ATP site.

This sequence belongs to the TmcAL family.

It is found in the cytoplasm. It catalyses the reaction cytidine(34) in elongator tRNA(Met) + acetate + ATP = N(4)-acetylcytidine(34) in elongator tRNA(Met) + AMP + diphosphate. Catalyzes the formation of N(4)-acetylcytidine (ac(4)C) at the wobble position of elongator tRNA(Met), using acetate and ATP as substrates. First activates an acetate ion to form acetyladenylate (Ac-AMP) and then transfers the acetyl group to tRNA to form ac(4)C34. This Lactococcus lactis subsp. cremoris (strain SK11) protein is tRNA(Met) cytidine acetate ligase.